The following is a 235-amino-acid chain: Phosphoribosylformylglycinamidine synthase subunit PurQ (235 aa).

The Glutamine amidotransferase type-1 domain occupies 3–234; it reads FGVLVFPGSN…LNSLMAQGVT (232 aa). C86 acts as the Nucleophile in catalysis. Residues H203 and E205 contribute to the active site.

In terms of assembly, part of the FGAM synthase complex composed of 1 PurL, 1 PurQ and 2 PurS subunits.

It is found in the cytoplasm. The enzyme catalyses N(2)-formyl-N(1)-(5-phospho-beta-D-ribosyl)glycinamide + L-glutamine + ATP + H2O = 2-formamido-N(1)-(5-O-phospho-beta-D-ribosyl)acetamidine + L-glutamate + ADP + phosphate + H(+). It carries out the reaction L-glutamine + H2O = L-glutamate + NH4(+). Its pathway is purine metabolism; IMP biosynthesis via de novo pathway; 5-amino-1-(5-phospho-D-ribosyl)imidazole from N(2)-formyl-N(1)-(5-phospho-D-ribosyl)glycinamide: step 1/2. Part of the phosphoribosylformylglycinamidine synthase complex involved in the purines biosynthetic pathway. Catalyzes the ATP-dependent conversion of formylglycinamide ribonucleotide (FGAR) and glutamine to yield formylglycinamidine ribonucleotide (FGAM) and glutamate. The FGAM synthase complex is composed of three subunits. PurQ produces an ammonia molecule by converting glutamine to glutamate. PurL transfers the ammonia molecule to FGAR to form FGAM in an ATP-dependent manner. PurS interacts with PurQ and PurL and is thought to assist in the transfer of the ammonia molecule from PurQ to PurL. This Acaryochloris marina (strain MBIC 11017) protein is Phosphoribosylformylglycinamidine synthase subunit PurQ.